The following is a 258-amino-acid chain: tRNA pseudouridine synthase A (258 aa).

Asp53 (nucleophile) is an active-site residue. A substrate-binding site is contributed by Tyr111.

This sequence belongs to the tRNA pseudouridine synthase TruA family. As to quaternary structure, homodimer.

It catalyses the reaction uridine(38/39/40) in tRNA = pseudouridine(38/39/40) in tRNA. In terms of biological role, formation of pseudouridine at positions 38, 39 and 40 in the anticodon stem and loop of transfer RNAs. The chain is tRNA pseudouridine synthase A from Streptococcus agalactiae serotype V (strain ATCC BAA-611 / 2603 V/R).